We begin with the raw amino-acid sequence, 173 residues long: Protein FAM180A (173 aa).

The N-terminal stretch at 1–17 is a signal peptide; the sequence is MSWKALTILLVFSSTQA.

This sequence belongs to the FAM180 family.

The protein localises to the secreted. The polypeptide is Protein FAM180A (Fam180a) (Mus musculus (Mouse)).